Here is a 188-residue protein sequence, read N- to C-terminus: Probable RNA-binding protein 18 (188 aa).

Residues 23–104 (HRLWIGNIDP…KKLVVRWAHA (82 aa)) form the RRM domain. Positions 151–188 (EENPDDYSGPSAYTYNKPPDKREKRSQPYHKHFRKHRR) are disordered. Residues 177-188 (QPYHKHFRKHRR) show a composition bias toward basic residues.

The sequence is that of Probable RNA-binding protein 18 (rbm18) from Danio rerio (Zebrafish).